Reading from the N-terminus, the 177-residue chain is Large ribosomal subunit protein uL6 (177 aa).

The protein belongs to the universal ribosomal protein uL6 family. As to quaternary structure, part of the 50S ribosomal subunit.

This protein binds to the 23S rRNA, and is important in its secondary structure. It is located near the subunit interface in the base of the L7/L12 stalk, and near the tRNA binding site of the peptidyltransferase center. The protein is Large ribosomal subunit protein uL6 of Brucella melitensis biotype 1 (strain ATCC 23456 / CCUG 17765 / NCTC 10094 / 16M).